Consider the following 133-residue polypeptide: Small ribosomal subunit protein uS8 (133 aa).

A disordered region spans residues 1–29 (MANHDPISDMLTRIRNASEKRHETTRIPA). Over residues 16–25 (NASEKRHETT) the composition is skewed to basic and acidic residues.

The protein belongs to the universal ribosomal protein uS8 family. As to quaternary structure, part of the 30S ribosomal subunit. Contacts proteins S5 and S12.

Its function is as follows. One of the primary rRNA binding proteins, it binds directly to 16S rRNA central domain where it helps coordinate assembly of the platform of the 30S subunit. This Prochlorococcus marinus (strain MIT 9211) protein is Small ribosomal subunit protein uS8.